Consider the following 70-residue polypeptide: Putative membrane protein insertion efficiency factor (70 aa).

The protein belongs to the UPF0161 family.

Its subcellular location is the cell inner membrane. Functionally, could be involved in insertion of integral membrane proteins into the membrane. The chain is Putative membrane protein insertion efficiency factor from Francisella tularensis subsp. tularensis (strain SCHU S4 / Schu 4).